The primary structure comprises 367 residues: snRNA-activating protein complex subunit 1 (367 aa).

The SNAPC3-binding stretch occupies residues 1–168 (MGTPPGLQTD…EEFKDPSDRV (168 aa)). The SNAPC4-binding stretch occupies residues 164-268 (PSDRVMKLIT…AESLAKIKSK (105 aa)). Disordered stretches follow at residues 228–254 (KDRK…QETE) and 278–367 (KSRR…KRKH). Over residues 238–254 (KINDGEEKMEGNSQETE) the composition is skewed to basic and acidic residues. Residues S289 and S290 each carry the phosphoserine modification. Residues 292-301 (CDSASGQGQV) show a composition bias toward polar residues.

Part of the SNAPc complex composed of 5 subunits: SNAPC1, SNAPC2, SNAPC3, SNAPC4 and SNAPC5. SNAPC1 interacts with SNAPC3, SNAPC4 and TBP.

It localises to the nucleus. Functionally, part of the SNAPc complex required for the transcription of both RNA polymerase II and III small-nuclear RNA genes. Binds to the proximal sequence element (PSE), a non-TATA-box basal promoter element common to these 2 types of genes. Recruits TBP and BRF2 to the U6 snRNA TATA box. This Macaca fascicularis (Crab-eating macaque) protein is snRNA-activating protein complex subunit 1 (SNAPC1).